The following is a 307-amino-acid chain: Coproporphyrin III ferrochelatase (307 aa).

Residues Tyr-12, Arg-29, 45-46, Ser-53, and Tyr-124 each bind Fe-coproporphyrin III; that span reads RY. Positions 181 and 263 each coordinate Fe(2+).

This sequence belongs to the ferrochelatase family.

The protein localises to the cytoplasm. It carries out the reaction Fe-coproporphyrin III + 2 H(+) = coproporphyrin III + Fe(2+). Its pathway is porphyrin-containing compound metabolism; protoheme biosynthesis. Functionally, involved in coproporphyrin-dependent heme b biosynthesis. Catalyzes the insertion of ferrous iron into coproporphyrin III to form Fe-coproporphyrin III. This Staphylococcus aureus (strain MRSA252) protein is Coproporphyrin III ferrochelatase.